The primary structure comprises 245 residues: Superoxide dismutase [Mn], mitochondrial (245 aa).

Residues 1-32 (MVNLGSIWQNLLASQAPLQSMTGNATTMAGLA) constitute a mitochondrion transit peptide. Mn(2+) is bound by residues His58, His106, Asp196, and His200.

It belongs to the iron/manganese superoxide dismutase family. In terms of assembly, homotetramer. Mn(2+) serves as cofactor.

It is found in the mitochondrion matrix. It carries out the reaction 2 superoxide + 2 H(+) = H2O2 + O2. Functionally, destroys superoxide anion radicals which are normally produced within the cells and which are toxic to biological systems. The polypeptide is Superoxide dismutase [Mn], mitochondrial (sod-2) (Neurospora crassa (strain ATCC 24698 / 74-OR23-1A / CBS 708.71 / DSM 1257 / FGSC 987)).